A 263-amino-acid chain; its full sequence is Receptor-transporting protein 1 (263 aa).

The Cytoplasmic segment spans residues Met1–Ser238. A 3CxxC-type zinc finger spans residues Ala88–Gly197. The helical transmembrane segment at Ile239 to Phe259 threads the bilayer. Over Arg260–Val263 the chain is Extracellular.

This sequence belongs to the TMEM7 family. As to quaternary structure, interacts with olfactory receptors. Expressed in testis.

The protein localises to the cell membrane. In terms of biological role, specifically promotes functional cell surface expression of olfactory receptors, but not of other GPCRs. The chain is Receptor-transporting protein 1 (RTP1) from Homo sapiens (Human).